The primary structure comprises 295 residues: (R)-phenoxypropionate/alpha-ketoglutarate-dioxygenase (295 aa).

Fe cation is bound by residues H111 and D113. 2 residues coordinate 2-oxoglutarate: T138 and W255. H270 contacts Fe cation. Residue R281 participates in 2-oxoglutarate binding.

The protein belongs to the TfdA dioxygenase family. In terms of assembly, homotrimer. Fe cation is required as a cofactor. The cofactor is L-ascorbate.

It carries out the reaction (R)-2-(4-chloro-2-methylphenoxy)propanoate + 2-oxoglutarate + O2 = 2-methyl-4-chlorophenol + pyruvate + succinate + CO2. The catalysed reaction is (R)-(2,4-dichlorophenoxy)propanoate + 2-oxoglutarate + O2 = 2,4-dichlorophenol + pyruvate + succinate + CO2. The protein operates within xenobiotic degradation; 2-(2,4-dichlorophenoxy)propanoate degradation. Inhibited by divalent cations, most significantly by copper and nickel, and by diethylpyrocarbonate (DEPC). Functionally, involved in the degradation of the phenoxypropionate herbicides. Catalyzes the enantiospecific cleavage of the ether bond in the herbicid R-dichlorprop ((R)-2-(2,4-dichlorophenoxy)propionate)(R-2,4-DP) and R-mecoprop ((R)-2-(4-chloro-2-methylphenoxy)propionate)(R-2,4-MCPP). It can also accept (RS)-2-(2,4,5-trichlorophenoxy)propionate, (RS)-2-(4-chlorophenoxy)propionate, (RS)-2-(m-chlorophenoxy)propionate, however it can only accept 2-oxoglutarate as oxygen acceptor. The sequence is that of (R)-phenoxypropionate/alpha-ketoglutarate-dioxygenase from Delftia acidovorans (Pseudomonas acidovorans).